A 293-amino-acid chain; its full sequence is NAD kinase (293 aa).

Asp-73 acts as the Proton acceptor in catalysis. NAD(+)-binding positions include 73–74 (DG), 147–148 (NE), Arg-175, Asp-177, and 188–193 (TAYSMS).

Belongs to the NAD kinase family. The cofactor is a divalent metal cation.

Its subcellular location is the cytoplasm. It carries out the reaction NAD(+) + ATP = ADP + NADP(+) + H(+). Functionally, involved in the regulation of the intracellular balance of NAD and NADP, and is a key enzyme in the biosynthesis of NADP. Catalyzes specifically the phosphorylation on 2'-hydroxyl of the adenosine moiety of NAD to yield NADP. This Colwellia psychrerythraea (strain 34H / ATCC BAA-681) (Vibrio psychroerythus) protein is NAD kinase.